Here is a 227-residue protein sequence, read N- to C-terminus: NAD(P)H-hydrate epimerase (227 aa).

One can recognise a YjeF N-terminal domain in the interval 12 to 221 (SRLVDELAIA…DIGVPRALLE (210 aa)). 59–63 (NNGGD) serves as a coordination point for (6S)-NADPHX. Residues Asn-60 and Asp-131 each coordinate K(+). Residues 135 to 141 (GTGATGE) and Asp-164 contribute to the (6S)-NADPHX site. A K(+)-binding site is contributed by Thr-167.

It belongs to the NnrE/AIBP family. Requires K(+) as cofactor.

It catalyses the reaction (6R)-NADHX = (6S)-NADHX. The enzyme catalyses (6R)-NADPHX = (6S)-NADPHX. In terms of biological role, catalyzes the epimerization of the S- and R-forms of NAD(P)HX, a damaged form of NAD(P)H that is a result of enzymatic or heat-dependent hydration. This is a prerequisite for the S-specific NAD(P)H-hydrate dehydratase to allow the repair of both epimers of NAD(P)HX. The sequence is that of NAD(P)H-hydrate epimerase from Pirellula staleyi (strain ATCC 27377 / DSM 6068 / ICPB 4128) (Pirella staleyi).